The primary structure comprises 235 residues: 7-cyano-7-deazaguanine synthase (235 aa).

12-22 (FSGGQDSTTCL) contacts ATP. 4 residues coordinate Zn(2+): C200, C215, C218, and C221.

The protein belongs to the QueC family. Zn(2+) is required as a cofactor.

The enzyme catalyses 7-carboxy-7-deazaguanine + NH4(+) + ATP = 7-cyano-7-deazaguanine + ADP + phosphate + H2O + H(+). The protein operates within purine metabolism; 7-cyano-7-deazaguanine biosynthesis. Functionally, catalyzes the ATP-dependent conversion of 7-carboxy-7-deazaguanine (CDG) to 7-cyano-7-deazaguanine (preQ(0)). This is 7-cyano-7-deazaguanine synthase from Leptothrix cholodnii (strain ATCC 51168 / LMG 8142 / SP-6) (Leptothrix discophora (strain SP-6)).